We begin with the raw amino-acid sequence, 888 residues long: MDESALLDLLECPVCLERLDASAKVLPCQHTFCKRCLLGIVGSRNELRCPECRTLVGSGVEELPSNILLVRLLDGIKQRPWKPGPGGGSGTNCTNALRSQSSTVANCSSKDLQSSQGGQQPRVQAWSPPVRGIPQLPCAKALYNYEGKEPGDLKFSKGDIIILRRQVDENWYHGEVNGIHGFFPTNFVQIIKPLPQPPPQCKALYDFEVKDKEADKDCLPFAKDDVLTVIRRVDENWAEGMLADKIGIFPISYVEFNSAAKQLIEWDKPPVPGVDAGECSSAAAQSSTAPKHSDTKKNTKKRHSFTSLTMANKSSQASQNRHSMEISPPVLISSSNPTAAARISELSGLSCSAPSQVHISTTGLIVTPPPSSPVTTGPSFTFPSDVPYQATLGTLNPPLLPPPLLAATVLASTPPGAAAAAAAAGMGPRPMAGSTDQIAHLRPQTRPSVYVAIYPYTPRKEDELELRKGEMFLVFERCQDGWFKGTSMHTSKIGVFPGNYVAPVTRAVTNASQAKVPMSTAGQTSRGVTMVSPSTAGGPAQKLQGNGVAGSPSVVPTAVVSAAHIQTSPQAKVLLHMTGQMTVNQARNAVRTVAAHNQERPTAAVTPIQVQNAAGLSPASVGLPHHSLASPQPAPLMPGSATHTAAISISRASAPLACAAAAPLTSSSITSASLEAEPSGRIVTVLPGLPTSPDSASLACGNSSATKPDKDSKKEKKGLLKLLSGASTKRKPRVSPPASPTLEVELGSAELPLHGAVGPELPPGGGHGRAGSCPVDGDGPVTTAVAGAALAQDAFHRKASSLDSAVPIAPPPRQACSSLGPVLNESRPVVCERHRVVVSYPPQSEAELELKEGDIVFVHKKREDGWFKGTLQRNGKTGLFPGSFVENI.

An RING-type zinc finger spans residues 12–53 (CPVCLERLDASAKVLPCQHTFCKRCLLGIVGSRNELRCPECR). SH3 domains are found at residues 134–193 (PQLP…IIKP) and 196–259 (QPPP…FNSA). Residues 275 to 321 (DAGECSSAAAQSSTAPKHSDTKKNTKKRHSFTSLTMANKSSQASQNR) are disordered. The tract at residues 292-362 (HSDTKKNTKK…APSQVHISTT (71 aa)) is interaction with RAC1. Phosphoserine is present on serine 304. Polar residues predominate over residues 305–321 (FTSLTMANKSSQASQNR). Positions 440-543 (HLRPQTRPSV…STAGGPAQKL (104 aa)) are interaction with AKT2. The 62-residue stretch at 445-506 (TRPSVYVAIY…PGNYVAPVTR (62 aa)) folds into the SH3 3 domain. 3 disordered regions span residues 516–549 (VPMSTAGQTSRGVTMVSPSTAGGPAQKLQGNGVA), 617–637 (SPASVGLPHHSLASPQPAPLM), and 693–741 (PDSA…ASPT). The span at 520-535 (TAGQTSRGVTMVSPST) shows a compositional bias: polar residues. The residue at position 532 (serine 532) is a Phosphoserine. Positions 693–704 (PDSASLACGNSS) are enriched in polar residues. The segment covering 707–718 (KPDKDSKKEKKG) has biased composition (basic and acidic residues). The residue at position 735 (serine 735) is a Phosphoserine. The SH3 4 domain occupies 829-888 (VVCERHRVVVSYPPQSEAELELKEGDIVFVHKKREDGWFKGTLQRNGKTGLFPGSFVENI).

This sequence belongs to the SH3RF family. Interacts with HERP1. Interacts with RAC1; in a GTP-dependent manner. Interacts with MAP3K10/MLK2 and MAP3K11/MLK3. Interacts with MAPK8IP; this interaction leads to the PJAC complex (POSH-JIP or SH3RF1/MAPK8IP apoptotic complex) with a 1:1 ratio. Interacts with SIAH1. Probably part of a signaling complex that may contain SH3RF1, MAPK8IP, DLK1, MAP2K4/MKK4, MAP2K7/MKK7, MAPK8/JNK1, MAPK9/JNK2, AKT1 and AKT2. Found in a complex with RAC2, MAP3K7/TAK1, MAP2K7/MKK7, MAPK8IP1/JIP1, MAPK8/JNK1 and MAPK9/JNK2. Found in a complex with RAC1, MAP3K11/MLK3, MAP2K7/MKK7, MAPK8IP1/JIP1 and MAPK8/JNK1. Interacts with SH3RF2. In terms of processing, phosphorylated at Ser-304 by AKT1 and AKT2. When phosphorylated, it has reduced ability to bind Rac. Autoubiquitinated. Ubiquitinated by SH3RF2, leading to proteasome-mediated degradation.

It localises to the cytoplasm. Its subcellular location is the perinuclear region. The protein localises to the cell projection. The protein resides in the lamellipodium. It is found in the golgi apparatus. It localises to the trans-Golgi network. The enzyme catalyses S-ubiquitinyl-[E2 ubiquitin-conjugating enzyme]-L-cysteine + [acceptor protein]-L-lysine = [E2 ubiquitin-conjugating enzyme]-L-cysteine + N(6)-ubiquitinyl-[acceptor protein]-L-lysine.. The protein operates within protein modification; protein ubiquitination. Its function is as follows. Has E3 ubiquitin-protein ligase activity. In the absence of an external substrate, it can catalyze self-ubiquitination. Stimulates ubiquitination of potassium channel KCNJ1, enhancing it's dynamin-dependent and clathrin-independent endocytosis. Acts as a scaffold protein that coordinates with MAPK8IP1/JIP1 in organizing different components of the JNK pathway, including RAC1 or RAC2, MAP3K11/MLK3 or MAP3K7/TAK1, MAP2K7/MKK7, MAPK8/JNK1 and/or MAPK9/JNK2 into a functional multiprotein complex to ensure the effective activation of the JNK signaling pathway. Regulates the differentiation of CD4(+) and CD8(+) T-cells and promotes T-helper 1 (Th1) cell differentiation. Regulates the activation of MAPK8/JNK1 and MAPK9/JNK2 in CD4(+) T-cells and the activation of MAPK8/JNK1 in CD8(+) T-cells. Controls proper cortical neuronal migration and the formation of proximal cytoplasmic dilation in the leading process (PCDLP) in migratory neocortical neurons by regulating the proper localization of activated RAC1 and F-actin assembly. In Pongo abelii (Sumatran orangutan), this protein is E3 ubiquitin-protein ligase SH3RF1 (SH3RF1).